The chain runs to 228 residues: Urease accessory protein UreE (228 aa).

Residues 188-228 (PLDEPHGSGLHIHAIHSHGDGHSHDHDHSHSHGDHDHDHKH) are disordered. Basic and acidic residues predominate over residues 204–228 (SHGDGHSHDHDHSHSHGDHDHDHKH).

It belongs to the UreE family.

It is found in the cytoplasm. Its function is as follows. Involved in urease metallocenter assembly. Binds nickel. Probably functions as a nickel donor during metallocenter assembly. This chain is Urease accessory protein UreE, found in Yersinia kristensenii.